Consider the following 153-residue polypeptide: MTQLPYAVDAETPLNPAELNVLRAQYEKEGEMVGVQTKFNYAWGLVKSNVRADQHLGVMLLSEIFRTSPERRRECLYYLALGNYKLGNYAQARKYNDALLENEPANLQAANLRALIDDKVTKEGLMGVAIISGVAVAAGVIGGVLLRNLGRKR.

The Cytoplasmic segment spans residues 1–124 (MTQLPYAVDA…LIDDKVTKEG (124 aa)). Residues 73-106 (RECLYYLALGNYKLGNYAQARKYNDALLENEPAN) form a TPR repeat. A helical transmembrane segment spans residues 125 to 145 (LMGVAIISGVAVAAGVIGGVL). Residues 146–153 (LRNLGRKR) are Mitochondrial intermembrane-facing.

This sequence belongs to the FIS1 family.

The protein resides in the mitochondrion outer membrane. Has a role in mitochondrial fission. Has a role in outer membrane fission but not matrix separation. This chain is Mitochondrial fission 1 protein (mtp-2), found in Neurospora crassa (strain ATCC 24698 / 74-OR23-1A / CBS 708.71 / DSM 1257 / FGSC 987).